Reading from the N-terminus, the 156-residue chain is MSDPAKVRRHAERVRELVASVVRSQIKDPRLGMITITDARITADLRDATVFYTVLGDASAQASTAAALESAKGMVRSTVGKALGLRHSPTLTFVLDDVQDQVKHIDDLLAQARHADAEVQRLATRAEYAGEAQPYRLEEEPEGSGDEVPPPGGDQR.

A disordered region spans residues 124-156 (TRAEYAGEAQPYRLEEEPEGSGDEVPPPGGDQR).

The protein belongs to the RbfA family. As to quaternary structure, monomer. Binds 30S ribosomal subunits, but not 50S ribosomal subunits or 70S ribosomes.

The protein resides in the cytoplasm. In terms of biological role, one of several proteins that assist in the late maturation steps of the functional core of the 30S ribosomal subunit. Associates with free 30S ribosomal subunits (but not with 30S subunits that are part of 70S ribosomes or polysomes). Required for efficient processing of 16S rRNA. May interact with the 5'-terminal helix region of 16S rRNA. The protein is Ribosome-binding factor A of Salinispora tropica (strain ATCC BAA-916 / DSM 44818 / JCM 13857 / NBRC 105044 / CNB-440).